We begin with the raw amino-acid sequence, 458 residues long: SH2 domain-containing protein 7 (458 aa).

The SH2 domain maps to 51–142; the sequence is WFHGFITRKQ…PFGETLAAAC (92 aa). Disordered regions lie at residues 204-235 and 267-326; these read RSVSDEVSAEVPTRVPPIPRRSPSLLDESPAG and AGSL…TLGS. A compositionally biased stretch (basic and acidic residues) spans 278-288; sequence PSGKLSDEDQN. Residues 304–326 show a composition bias toward polar residues; it reads QGSTMPYTSLGFSLPPSSETLGS.

The sequence is that of SH2 domain-containing protein 7 (Sh2d7) from Mus musculus (Mouse).